Here is a 506-residue protein sequence, read N- to C-terminus: Maturase K (506 aa).

The protein belongs to the intron maturase 2 family. MatK subfamily.

The protein localises to the plastid. It is found in the chloroplast. Its function is as follows. Usually encoded in the trnK tRNA gene intron. Probably assists in splicing its own and other chloroplast group II introns. The polypeptide is Maturase K (Trifolium subterraneum (Subterranean clover)).